Reading from the N-terminus, the 380-residue chain is Histidinol-phosphate aminotransferase (380 aa).

An N6-(pyridoxal phosphate)lysine modification is found at Lys-235.

Belongs to the class-II pyridoxal-phosphate-dependent aminotransferase family. Histidinol-phosphate aminotransferase subfamily. Homodimer. Requires pyridoxal 5'-phosphate as cofactor.

It catalyses the reaction L-histidinol phosphate + 2-oxoglutarate = 3-(imidazol-4-yl)-2-oxopropyl phosphate + L-glutamate. It participates in amino-acid biosynthesis; L-histidine biosynthesis; L-histidine from 5-phospho-alpha-D-ribose 1-diphosphate: step 7/9. This chain is Histidinol-phosphate aminotransferase, found in Rhodococcus opacus (strain B4).